Here is a 318-residue protein sequence, read N- to C-terminus: Ribose-phosphate pyrophosphokinase 1 (318 aa).

ATP contacts are provided by residues 43-45 and 102-103; these read DGE and RQ. Residues histidine 136 and aspartate 176 each contribute to the Mg(2+) site. The active site involves lysine 199. D-ribose 5-phosphate contacts are provided by residues arginine 201, aspartate 225, and 229 to 233; that span reads DTAGT.

The protein belongs to the ribose-phosphate pyrophosphokinase family. Class I subfamily. In terms of assembly, homohexamer. The cofactor is Mg(2+).

The protein resides in the cytoplasm. It carries out the reaction D-ribose 5-phosphate + ATP = 5-phospho-alpha-D-ribose 1-diphosphate + AMP + H(+). The protein operates within metabolic intermediate biosynthesis; 5-phospho-alpha-D-ribose 1-diphosphate biosynthesis; 5-phospho-alpha-D-ribose 1-diphosphate from D-ribose 5-phosphate (route I): step 1/1. Involved in the biosynthesis of the central metabolite phospho-alpha-D-ribosyl-1-pyrophosphate (PRPP) via the transfer of pyrophosphoryl group from ATP to 1-hydroxyl of ribose-5-phosphate (Rib-5-P). This Listeria innocua serovar 6a (strain ATCC BAA-680 / CLIP 11262) protein is Ribose-phosphate pyrophosphokinase 1.